A 122-amino-acid polypeptide reads, in one-letter code: Small ribosomal subunit protein uS8c (122 aa).

It belongs to the universal ribosomal protein uS8 family. In terms of assembly, part of the 30S ribosomal subunit.

The protein localises to the plastid. It localises to the chloroplast. In terms of biological role, one of the primary rRNA binding proteins, it binds directly to 16S rRNA central domain where it helps coordinate assembly of the platform of the 30S subunit. This chain is Small ribosomal subunit protein uS8c (rps8), found in Ostreococcus tauri.